The chain runs to 629 residues: Hemocyanin F chain (629 aa).

Cu cation contacts are provided by histidine 172, histidine 176, histidine 203, histidine 324, histidine 328, and histidine 364. N-linked (GlcNAc...) asparagine glycosylation is found at asparagine 395 and asparagine 447. The span at 503–513 (SESSVTVSHTP) shows a compositional bias: polar residues. The disordered stretch occupies residues 503 to 522 (SESSVTVSHTPTFEELQRGE). N-linked (GlcNAc...) asparagine glycosylation occurs at asparagine 527. A disulfide bond links cysteine 534 and cysteine 582. Asparagine 615 carries an N-linked (GlcNAc...) asparagine glycan.

The protein belongs to the tyrosinase family. Hemocyanin subfamily. As to quaternary structure, tarantula hemocyanin is a 24-chain polymer with seven different chains identified. In terms of tissue distribution, hemolymph.

It is found in the secreted. Its subcellular location is the extracellular space. Hemocyanins are copper-containing oxygen carriers occurring freely dissolved in the hemolymph of many mollusks and arthropods. This chain is Hemocyanin F chain (HCF), found in Aphonopelma sp. (American tarantula).